A 1011-amino-acid chain; its full sequence is Protein argonaute 1C (1011 aa).

The span at methionine 1–histidine 11 shows a compositional bias: basic residues. Disordered stretches follow at residues methionine 1–alanine 95 and arginine 107–proline 147. Low complexity-rich tracts occupy residues alanine 28 to alanine 53 and glutamine 61 to serine 92. The span at alanine 127–serine 140 shows a compositional bias: polar residues. The PAZ domain occupies proline 352–glutamate 462. Residues leucine 638–glutamate 959 enclose the Piwi domain. A compositionally biased stretch (low complexity) spans serine 963–serine 982. Residues serine 963–valine 994 form a disordered region.

This sequence belongs to the argonaute family. Ago subfamily.

Functionally, probably involved in the RNA silencing pathway. May bind to short RNAs such as microRNAs (miRNAs) or short interfering RNAs (siRNAs), and represses the translation of mRNAs which are complementary to them. In Oryza sativa subsp. japonica (Rice), this protein is Protein argonaute 1C (AGO1C).